We begin with the raw amino-acid sequence, 270 residues long: Regulatory protein RecX (270 aa).

The protein belongs to the RecX family.

It is found in the cytoplasm. Functionally, modulates RecA activity. This chain is Regulatory protein RecX, found in Bacillus cereus (strain G9842).